We begin with the raw amino-acid sequence, 399 residues long: Coenzyme A biosynthesis bifunctional protein CoaBC (399 aa).

Residues 1–190 form a phosphopantothenoylcysteine decarboxylase region; it reads MQTLAGKKIL…FQPKVLEGKS (190 aa). C159 (proton donor) is an active-site residue. Positions 191–399 are phosphopantothenate--cysteine ligase; that stretch reads ILISAGPTRE…KILEKMRELM (209 aa). Residues D279, K289, 307–310, F326, K340, and K344 contribute to the CTP site; that span reads PDIV.

The protein in the N-terminal section; belongs to the HFCD (homo-oligomeric flavin containing Cys decarboxylase) superfamily. In the C-terminal section; belongs to the PPC synthetase family. Mg(2+) is required as a cofactor. Requires FMN as cofactor.

It carries out the reaction N-[(R)-4-phosphopantothenoyl]-L-cysteine + H(+) = (R)-4'-phosphopantetheine + CO2. It catalyses the reaction (R)-4'-phosphopantothenate + L-cysteine + CTP = N-[(R)-4-phosphopantothenoyl]-L-cysteine + CMP + diphosphate + H(+). The protein operates within cofactor biosynthesis; coenzyme A biosynthesis; CoA from (R)-pantothenate: step 2/5. Its pathway is cofactor biosynthesis; coenzyme A biosynthesis; CoA from (R)-pantothenate: step 3/5. Its function is as follows. Catalyzes two sequential steps in the biosynthesis of coenzyme A. In the first step cysteine is conjugated to 4'-phosphopantothenate to form 4-phosphopantothenoylcysteine. In the second step the latter compound is decarboxylated to form 4'-phosphopantotheine. In Vibrio parahaemolyticus serotype O3:K6 (strain RIMD 2210633), this protein is Coenzyme A biosynthesis bifunctional protein CoaBC.